Reading from the N-terminus, the 258-residue chain is uncharacterized protein (258 aa).

N-linked (GlcNAc...) asparagine; by host glycans are attached at residues Asn-60, Asn-104, and Asn-113. Residues 147–156 (TTRKPGQKTT) show a composition bias toward low complexity. The segment at 147–183 (TTRKPGQKTTLSRLKTTPNKHTQHKRSTRRTSPRDYN) is disordered. A compositionally biased stretch (polar residues) spans 157-166 (LSRLKTTPNK). A compositionally biased stretch (basic residues) spans 167–177 (HTQHKRSTRRT). N-linked (GlcNAc...) asparagine; by host glycosylation is present at Asn-183. A helical membrane pass occupies residues 208–228 (AHSAWILIVIIIIIVVILFFF).

Belongs to the RL11 family.

Its subcellular location is the membrane. This is an uncharacterized protein from Human cytomegalovirus (strain AD169) (HHV-5).